A 630-amino-acid chain; its full sequence is Tyrosinase (630 aa).

Cu cation contacts are provided by H69, H92, H101, H317, H321, and H360. Positions 90-92 form a cross-link, 2'-(S-cysteinyl)-histidine (Cys-His); the sequence is CVH.

It belongs to the tyrosinase family. Cu(2+) is required as a cofactor.

The enzyme catalyses 2 L-dopa + O2 = 2 L-dopaquinone + 2 H2O. It carries out the reaction L-tyrosine + O2 = L-dopaquinone + H2O. In terms of biological role, this is a copper-containing oxidase that functions in the formation of pigments such as melanins and other polyphenolic compounds. This Aspergillus fumigatus (strain ATCC MYA-4609 / CBS 101355 / FGSC A1100 / Af293) (Neosartorya fumigata) protein is Tyrosinase (tyr1).